Consider the following 401-residue polypeptide: MDSGAVPTNASNCTDPFTHPSSCSPAPSPSSWVNFSHLEGNLSDPCGPNRTELGGSDRLCPSAGSPSMITAIIIMALYSIVCVVGLFGNFLVMYVIVRYTKMKTATNIYIFNLALADALATSTLPFQSVNYLMGTWPFGTILCKIVISIDYYNMFTSIFTLCTMSVDRYIAVCHPVKALDLRTPRNAKIINICNWILSSAIGLPVMFMATTKYRQGSIDCTLTFSHPTWYWENLLKICVFIFAFIMPILIITVCYGLMILRLKSVRMLSGSKEKDRNLRRITRMVLVVVAVFIVCWTPIHIYVIIKALITIPETTFQTVSWHFCIALGYTNSCLNPVLYAFLDENFKRCFREFCIPTSSTIEQQNSTRIRQNTRDHPSTANTVDRTNHQLENLEAETTPLP.

Residues 1-69 (MDSGAVPTNA…CPSAGSPSMI (69 aa)) lie on the Extracellular side of the membrane. N-linked (GlcNAc...) asparagine glycans are attached at residues asparagine 9, asparagine 12, asparagine 34, asparagine 41, and asparagine 49. The chain crosses the membrane as a helical span at residues 70–94 (TAIIIMALYSIVCVVGLFGNFLVMY). The Cytoplasmic portion of the chain corresponds to 95–107 (VIVRYTKMKTATN). The chain crosses the membrane as a helical span at residues 108–132 (IYIFNLALADALATSTLPFQSVNYL). The Extracellular portion of the chain corresponds to 133–143 (MGTWPFGTILC). A disulfide bridge connects residues cysteine 143 and cysteine 220. Residues 144–166 (KIVISIDYYNMFTSIFTLCTMSV) form a helical membrane-spanning segment. The Cytoplasmic portion of the chain corresponds to 167–186 (DRYIAVCHPVKALDLRTPRN). A Phosphotyrosine modification is found at tyrosine 169. The helical transmembrane segment at 187–208 (AKIINICNWILSSAIGLPVMFM) threads the bilayer. At 209–231 (ATTKYRQGSIDCTLTFSHPTWYW) the chain is on the extracellular side. The chain crosses the membrane as a helical span at residues 232-256 (ENLLKICVFIFAFIMPILIITVCYG). At 257-280 (LMILRLKSVRMLSGSKEKDRNLRR) the chain is on the cytoplasmic side. The helical transmembrane segment at 281–307 (ITRMVLVVVAVFIVCWTPIHIYVIIKA) threads the bilayer. Over 308–315 (LITIPETT) the chain is Extracellular. The chain crosses the membrane as a helical span at residues 316–339 (FQTVSWHFCIALGYTNSCLNPVLY). The short motif at 335–339 (NPVLY) is the NPxxY; plays a role in stabilizing the activated conformation of the receptor element. The Cytoplasmic portion of the chain corresponds to 340 to 401 (AFLDENFKRC…NLEAETTPLP (62 aa)). Residue cysteine 354 is the site of S-palmitoyl cysteine attachment. Residues 365–389 (NSTRIRQNTRDHPSTANTVDRTNHQ) form a disordered region. Serine 366 is modified (phosphoserine). Position 373 is a phosphothreonine (threonine 373). Residue serine 378 is modified to Phosphoserine. Threonine 397 bears the Phosphothreonine mark.

This sequence belongs to the G-protein coupled receptor 1 family. As to quaternary structure, forms homooligomers and heterooligomers with other GPCRs, such as OPRD1, OPRK1, OPRL1, NPFFR2, ADRA2A, SSTR2, CNR1 and CCR5 (probably in dimeric forms). Interacts with heterotrimeric G proteins; interaction with a heterotrimeric complex containing GNAI1, GNB1 and GNG2 stabilizes the active conformation of the receptor and increases its affinity for endomorphin-2, the synthetic opioid peptide DAMGO and for morphinan agonists. Interacts with PPL; the interaction disrupts agonist-mediated G-protein activation. Interacts (via C-terminus) with DNAJB4 (via C-terminus). Interacts with calmodulin; the interaction inhibits the constitutive activity of OPRM1; it abolishes basal and attenuates agonist-stimulated G-protein coupling. Interacts with FLNA, PLD2, RANBP9 and WLS and GPM6A. Interacts with RTP4. Interacts with SYP and GNAS. Interacts with RGS9, RGS17, RGS20, RGS4, PPP1R9B and HINT1. In terms of processing, phosphorylated. Differentially phosphorylated in basal and agonist-induced conditions. Agonist-mediated phosphorylation modulates receptor internalization. Phosphorylated by GRK2 in a agonist-dependent manner. Phosphorylation at Tyr-169 requires receptor activation, is dependent on non-receptor protein tyrosine kinase Src and results in a decrease in agonist efficacy by reducing G-protein coupling efficiency. Phosphorylated on tyrosine residues; the phosphorylation is involved in agonist-induced G-protein-independent receptor down-regulation. Phosphorylation at Ser-378 is involved in G-protein-dependent but not beta-arrestin-dependent activation of the ERK pathway. Ubiquitinated. A basal ubiquitination seems not to be related to degradation. Ubiquitination is increased upon formation of OPRM1:OPRD1 oligomers leading to proteasomal degradation; the ubiquitination is diminished by RTP4.

Its subcellular location is the cell membrane. It localises to the cell projection. The protein localises to the axon. The protein resides in the perikaryon. It is found in the dendrite. Its subcellular location is the endosome. Its function is as follows. Receptor for endogenous opioids such as beta-endorphin and endomorphin. Receptor for natural and synthetic opioids including morphine, heroin, DAMGO, fentanyl, etorphine, buprenorphin and methadone. Also activated by enkephalin peptides, such as Met-enkephalin or Met-enkephalin-Arg-Phe, with higher affinity for Met-enkephalin-Arg-Phe. Agonist binding to the receptor induces coupling to an inactive GDP-bound heterotrimeric G-protein complex and subsequent exchange of GDP for GTP in the G-protein alpha subunit leading to dissociation of the G-protein complex with the free GTP-bound G-protein alpha and the G-protein beta-gamma dimer activating downstream cellular effectors. The agonist- and cell type-specific activity is predominantly coupled to pertussis toxin-sensitive G(i) and G(o) G alpha proteins, GNAI1, GNAI2, GNAI3 and GNAO1, and to a lesser extent to pertussis toxin-insensitive G alpha proteins GNAZ and GNA15. They mediate an array of downstream cellular responses, including inhibition of adenylate cyclase activity and both N-type and L-type calcium channels, activation of inward rectifying potassium channels, mitogen-activated protein kinase (MAPK), phospholipase C (PLC), phosphoinositide/protein kinase (PKC), phosphoinositide 3-kinase (PI3K) and regulation of NF-kappa-B. Also couples to adenylate cyclase stimulatory G alpha proteins. The selective temporal coupling to G-proteins and subsequent signaling can be regulated by RGSZ proteins, such as RGS9, RGS17 and RGS4. Phosphorylation by members of the GPRK subfamily of Ser/Thr protein kinases and association with beta-arrestins is involved in short-term receptor desensitization. Beta-arrestins associate with the GPRK-phosphorylated receptor and uncouple it from the G-protein thus terminating signal transduction. The phosphorylated receptor is internalized through endocytosis via clathrin-coated pits which involves beta-arrestins. The activation of the ERK pathway occurs either in a G-protein-dependent or a beta-arrestin-dependent manner and is regulated by agonist-specific receptor phosphorylation. Acts as a class A G-protein coupled receptor (GPCR) which dissociates from beta-arrestin at or near the plasma membrane and undergoes rapid recycling. Receptor down-regulation pathways are varying with the agonist and occur dependent or independent of G-protein coupling. Endogenous ligands induce rapid desensitization, endocytosis and recycling. Heterooligomerization with other GPCRs can modulate agonist binding, signaling and trafficking properties. Involved in neurogenesis. This Bos taurus (Bovine) protein is Mu-type opioid receptor (OPRM1).